A 2224-amino-acid polypeptide reads, in one-letter code: Protein sidekick (2224 aa).

A signal peptide spans Met1–Ser47. Residues Cys48 to Thr2001 are Extracellular-facing. The Ig-like C2-type 1 domain occupies Pro72–Val155. Cys95 and Cys138 are joined by a disulfide. Residues Asn164, Asn250, Asn318, and Asn327 are each glycosylated (N-linked (GlcNAc...) asparagine). Ig-like C2-type domains follow at residues Pro261–Gln355, Pro359–Ser445, Pro455–Ser541, and Thr546–Ser636. Disulfide bonds link Cys283–Cys336 and Cys382–Cys433. Asn463, Asn485, and Asn491 each carry an N-linked (GlcNAc...) asparagine glycan. Intrachain disulfides connect Cys476-Cys525 and Cys567-Cys620. Asn628, Asn661, Asn707, Asn809, Asn870, Asn942, Asn1019, Asn1094, Asn1109, Asn1172, Asn1203, Asn1282, Asn1329, Asn1379, Asn1414, and Asn1420 each carry an N-linked (GlcNAc...) asparagine glycan. Fibronectin type-III domains follow at residues Pro643 to Glu753, Pro758 to Gly855, Pro860 to Asp967, Glu971 to Val1065, Ala1069 to Ala1164, Pro1169 to Ala1270, Gly1275 to Asp1372, Val1376 to Arg1469, Ala1474 to Ala1570, Gly1575 to Ala1677, Glu1682 to Gly1785, Ala1789 to Asp1883, and Ser1885 to Lys1984. Asn1843 and Asn1876 each carry an N-linked (GlcNAc...) asparagine glycan. The helical transmembrane segment at Trp2002–Leu2022 threads the bilayer. The Cytoplasmic segment spans residues Cys2023 to Val2224. Disordered stretches follow at residues Thr2068–Pro2157 and Leu2171–Ser2195. A Phosphoserine modification is found at Ser2071. Positions Gly2073–Arg2085 are enriched in low complexity. Thr2074 carries the phosphothreonine modification. Basic and acidic residues-rich tracts occupy residues His2112 to Asp2122 and Gln2144 to Pro2157. Residues Ser2113 and Ser2117 each carry the phosphoserine modification.

The protein belongs to the sidekick family.

The protein resides in the membrane. Participates in homotypic or heterotypic interactions in the eye during pattern formation to prevent extra cells from joining the precluster and differentiating as photoreceptor cells. The chain is Protein sidekick from Drosophila melanogaster (Fruit fly).